A 1201-amino-acid polypeptide reads, in one-letter code: Vitamin B12-dependent ribonucleotide reductase (1201 aa).

Substrate is bound by residues Ser153, 198–199 (AC), Gly230, 482–486 (NPCSE), and 683–687 (PTGTI). Cys199 and Cys495 are disulfide-bonded. The active-site Proton acceptor is the Asn482. The active-site Cysteine radical intermediate is Cys484. Glu486 serves as the catalytic Proton acceptor. Basic and acidic residues predominate over residues 1100–1118 (DEIGSKRATAESNGQEKET). Residues 1100–1120 (DEIGSKRATAESNGQEKETLS) form a disordered region.

This sequence belongs to the ribonucleoside diphosphate reductase class-2 family. Adenosylcob(III)alamin is required as a cofactor.

It catalyses the reaction a 2'-deoxyribonucleoside 5'-diphosphate + [thioredoxin]-disulfide + H2O = a ribonucleoside 5'-diphosphate + [thioredoxin]-dithiol. Functionally, catalyzes the reduction of ribonucleotides to deoxyribonucleotides. May function to provide a pool of deoxyribonucleotide precursors for DNA repair during oxygen limitation and/or for immediate growth after restoration of oxygen. The chain is Vitamin B12-dependent ribonucleotide reductase (nrdJ) from Leptospira interrogans serogroup Icterohaemorrhagiae serovar Lai (strain 56601).